The sequence spans 327 residues: Probable serine/threonine-protein kinase WNK5 (327 aa).

The segment at 1 to 48 (MPPNPTPPRRATTTTTRATSGVRRGEEEQGGMAVSASAGEEEEAFEEV) is disordered. Over residues 9 to 19 (RRATTTTTRAT) the composition is skewed to low complexity. Over residues 39-48 (GEEEEAFEEV) the composition is skewed to acidic residues. Residues 55–314 (GRYADVLGLG…AAELLRDPFF (260 aa)) form the Protein kinase domain. 136–139 (TEVC) is an ATP binding site. Aspartate 203 acts as the Proton acceptor in catalysis.

It belongs to the protein kinase superfamily. Ser/Thr protein kinase family. WNK subfamily.

The catalysed reaction is L-seryl-[protein] + ATP = O-phospho-L-seryl-[protein] + ADP + H(+). The enzyme catalyses L-threonyl-[protein] + ATP = O-phospho-L-threonyl-[protein] + ADP + H(+). The chain is Probable serine/threonine-protein kinase WNK5 (WNK5) from Oryza sativa subsp. japonica (Rice).